Here is a 229-residue protein sequence, read N- to C-terminus: Uracil-DNA glycosylase (229 aa).

D64 acts as the Proton acceptor in catalysis.

Belongs to the uracil-DNA glycosylase (UDG) superfamily. UNG family.

It localises to the cytoplasm. It carries out the reaction Hydrolyzes single-stranded DNA or mismatched double-stranded DNA and polynucleotides, releasing free uracil.. Functionally, excises uracil residues from the DNA which can arise as a result of misincorporation of dUMP residues by DNA polymerase or due to deamination of cytosine. This chain is Uracil-DNA glycosylase, found in Shigella flexneri serotype 5b (strain 8401).